The chain runs to 61 residues: uncharacterized protein (61 aa).

The next 2 helical transmembrane spans lie at 4–24 (IIAF…VASM) and 34–54 (SSVI…IMPM).

The protein localises to the cell membrane. This is an uncharacterized protein from Bacillus subtilis (strain 168).